The sequence spans 149 residues: Transcriptional repressor NrdR (149 aa).

A zinc finger spans residues 3–34 (CPFCSATDTKVIDSRLVSDGHQVRRRRQCLAC). In terms of domain architecture, ATP-cone spans 49–139 (PKVIKSNGNR…VYRSFEDIKE (91 aa)).

The protein belongs to the NrdR family. It depends on Zn(2+) as a cofactor.

Negatively regulates transcription of bacterial ribonucleotide reductase nrd genes and operons by binding to NrdR-boxes. This Aliivibrio fischeri (strain ATCC 700601 / ES114) (Vibrio fischeri) protein is Transcriptional repressor NrdR.